A 209-amino-acid polypeptide reads, in one-letter code: ATP-dependent Clp protease proteolytic subunit (209 aa).

S101 acts as the Nucleophile in catalysis. H126 is a catalytic residue.

It belongs to the peptidase S14 family. As to quaternary structure, component of the chloroplastic Clp protease core complex.

It localises to the plastid. Its subcellular location is the chloroplast stroma. The catalysed reaction is Hydrolysis of proteins to small peptides in the presence of ATP and magnesium. alpha-casein is the usual test substrate. In the absence of ATP, only oligopeptides shorter than five residues are hydrolyzed (such as succinyl-Leu-Tyr-|-NHMec, and Leu-Tyr-Leu-|-Tyr-Trp, in which cleavage of the -Tyr-|-Leu- and -Tyr-|-Trp bonds also occurs).. Functionally, cleaves peptides in various proteins in a process that requires ATP hydrolysis. Has a chymotrypsin-like activity. Plays a major role in the degradation of misfolded proteins. The polypeptide is ATP-dependent Clp protease proteolytic subunit (Huperzia lucidula (Shining clubmoss)).